The following is a 128-amino-acid chain: Large ribosomal subunit protein bL20c (128 aa).

This sequence belongs to the bacterial ribosomal protein bL20 family.

Its subcellular location is the plastid. Its function is as follows. Binds directly to 23S ribosomal RNA and is necessary for the in vitro assembly process of the 50S ribosomal subunit. It is not involved in the protein synthesizing functions of that subunit. This is Large ribosomal subunit protein bL20c (rpl20) from Epifagus virginiana (Beechdrops).